The sequence spans 393 residues: N-lysine methyltransferase KMT5A (393 aa).

A disordered region spans residues 68-88 (PGPEMVERRGPGRPRTDGENV). Basic and acidic residues predominate over residues 72-85 (MVERRGPGRPRTDG). Ser-100 carries the phosphoserine modification. A coiled-coil region spans residues 134 to 163 (RKREEKRNAGNAVRSAMKSEEQKIKDARKG). Residues 135 to 241 (KREEKRNAGN…SRKSKAELQS (107 aa)) are disordered. Over residues 150–162 (MKSEEQKIKDARK) the composition is skewed to basic and acidic residues. N6-acetyllysine is present on Lys-162. Phosphothreonine is present on Thr-181. Over residues 197–213 (ALKKPIKGKQAPRKKAQ) the composition is skewed to basic residues. The SET domain occupies 257-378 (EGMKIDLIDG…AGEELLYDYG (122 aa)). S-adenosyl-L-methionine is bound by residues 267 to 269 (KGR), Tyr-312, and 339 to 340 (NH).

It belongs to the class V-like SAM-binding methyltransferase superfamily. Histone-lysine methyltransferase family. PR/SET subfamily. Interacts with L3MBTL1. As to quaternary structure, interacts with SIRT2 (phosphorylated form); the interaction is direct, stimulates KMT5A-mediated methyltransferase activity at histone H4 'Lys-20' (H4K20me1) and is increased in a H(2)O(2)-induced oxidative stress-dependent manner. Post-translationally, acetylated at Lys-162; does not affect methyltransferase activity. Deacetylated at Lys-162 possibly by SIRT2; does not change methyltransferase activity. In terms of processing, ubiquitinated and degraded by the DCX(DTL) complex.

It localises to the nucleus. It is found in the chromosome. The enzyme catalyses L-lysyl(20)-[histone H4] + S-adenosyl-L-methionine = N(6)-methyl-L-lysyl(20)-[histone H4] + S-adenosyl-L-homocysteine + H(+). It carries out the reaction L-lysyl-[protein] + S-adenosyl-L-methionine = N(6)-methyl-L-lysyl-[protein] + S-adenosyl-L-homocysteine + H(+). Functionally, protein-lysine N-methyltransferase that monomethylates both histones and non-histone proteins. Specifically monomethylates 'Lys-20' of histone H4 (H4K20me1). H4K20me1 is enriched during mitosis and represents a specific tag for epigenetic transcriptional repression. Mainly functions in euchromatin regions, thereby playing a central role in the silencing of euchromatic genes. Required for cell proliferation, probably by contributing to the maintenance of proper higher-order structure of DNA during mitosis. Involved in chromosome condensation and proper cytokinesis. Nucleosomes are preferred as substrate compared to free histones. Mediates monomethylation of p53/TP53 at 'Lys-382', leading to repress p53/TP53-target genes. Plays a negative role in TGF-beta response regulation and a positive role in cell migration. The protein is N-lysine methyltransferase KMT5A of Homo sapiens (Human).